A 456-amino-acid polypeptide reads, in one-letter code: E3 ubiquitin-protein ligase PUB24 (456 aa).

One can recognise a U-box domain in the interval 9–83 (EIPNYFICPI…QHWCVENETR (75 aa)).

In terms of processing, auto-ubiquitinated.

The catalysed reaction is S-ubiquitinyl-[E2 ubiquitin-conjugating enzyme]-L-cysteine + [acceptor protein]-L-lysine = [E2 ubiquitin-conjugating enzyme]-L-cysteine + N(6)-ubiquitinyl-[acceptor protein]-L-lysine.. Its pathway is protein modification; protein ubiquitination. E3 ubiquitin-protein ligase that acts as a negative regulator of the immunity triggered by the pathogen-associated molecular patterns (PAMPs), in association with PUB22 and PUB23. This Arabidopsis thaliana (Mouse-ear cress) protein is E3 ubiquitin-protein ligase PUB24 (PUB24).